Consider the following 514-residue polypeptide: Probable WRKY transcription factor 4 (514 aa).

Disordered regions lie at residues 1-28, 175-204, and 278-394; these read MSEKEEAPSTSKSTGAPSRPTLSLPPRP, QPQTEYPPPSQVQSFSSGQAQIPTSAPLPA, and YKGQ…TVTE. Polar residues-rich tracts occupy residues 185-198 and 286-299; these read QVQSFSSGQAQIPT and PPQNTKRGNKDNTA. The WRKY 1 DNA-binding region spans 223–287; sequence NVDKPADDGY…YKGQHNHEPP (65 aa). The segment covering 300 to 313 has biased composition (low complexity); sequence NINGSSINNNRGSS. Polar residues predominate over residues 315-326; that stretch reads LGASQFQTNSSN. Positions 359–380 are enriched in basic and acidic residues; that stretch reads TDVREKDENEPDPKRRSTEVRI. A DNA-binding region (WRKY 2) is located at residues 403–468; that stretch reads SEVDLLDDGY…YEGKHNHDLP (66 aa). Residues cysteine 434, threonine 436, cysteine 439, histidine 463, and histidine 465 each contribute to the Zn(2+) site. The disordered stretch occupies residues 464-514; it reads NHDLPAAKSSSHAAAAAQLRPDNRPGGLANLNQQQQQQPVARLRLKEEQTT. A compositionally biased stretch (low complexity) spans 469 to 480; it reads AAKSSSHAAAAA.

In young, mature and senescent leaves.

It is found in the nucleus. In terms of biological role, transcription factor that binds specifically to the W box (5'-(T)TGAC[CT]-3'), a frequently occurring elicitor-responsive cis-acting element. Has a positive role in resistance to necrotrophic pathogens (e.g. Botrytis cinerea), but a negative effect on plant resistance to biotrophic pathogens (e.g. Pseudomonas syringae). The protein is Probable WRKY transcription factor 4 (WRKY4) of Arabidopsis thaliana (Mouse-ear cress).